We begin with the raw amino-acid sequence, 423 residues long: tRNA-dihydrouridine(16/17) synthase [NAD(P)(+)] (423 aa).

An N-acetylthreonine modification is found at threonine 2. FMN-binding positions include 35–37 and glutamine 92; that span reads PMV. Residue cysteine 121 is the Proton donor of the active site. Residues lysine 160, histidine 188, 223–225, and 247–248 contribute to the FMN site; these read NGN and AE. The disordered stretch occupies residues 404-423; the sequence is KKRKADVPLESADKKKDVKA. Residues 408–423 are compositionally biased toward basic and acidic residues; it reads ADVPLESADKKKDVKA.

Belongs to the Dus family. Dus1 subfamily. As to quaternary structure, monomer. It depends on FMN as a cofactor.

It catalyses the reaction 5,6-dihydrouridine(16) in tRNA + NADP(+) = uridine(16) in tRNA + NADPH + H(+). It carries out the reaction 5,6-dihydrouridine(16) in tRNA + NAD(+) = uridine(16) in tRNA + NADH + H(+). The catalysed reaction is 5,6-dihydrouridine(17) in tRNA + NAD(+) = uridine(17) in tRNA + NADH + H(+). The enzyme catalyses 5,6-dihydrouridine(17) in tRNA + NADP(+) = uridine(17) in tRNA + NADPH + H(+). It catalyses the reaction a 5,6-dihydrouridine in mRNA + NAD(+) = a uridine in mRNA + NADH + H(+). It carries out the reaction a 5,6-dihydrouridine in mRNA + NADP(+) = a uridine in mRNA + NADPH + H(+). Its function is as follows. Catalyzes the synthesis of dihydrouridine, a modified base found in the D-loop of most tRNAs. Specifically modifies U16 and U17 in cytoplasmic tRNAs. Also able to mediate dihydrouridylation of some mRNAs, thereby affecting their translation. In Saccharomyces cerevisiae (strain ATCC 204508 / S288c) (Baker's yeast), this protein is tRNA-dihydrouridine(16/17) synthase [NAD(P)(+)].